The primary structure comprises 274 residues: Protein bax (274 aa).

Residues 32-64 (TTASQKSHLTKASNKQVSSKQEYSRNSAKSSSL) are compositionally biased toward polar residues. The disordered stretch occupies residues 32–74 (TTASQKSHLTKASNKQVSSKQEYSRNSAKSSSLPDLRKYPSGT). 247 to 254 (GYSTKGKS) provides a ligand contact to ATP.

The polypeptide is Protein bax (bax) (Escherichia coli (strain K12)).